Reading from the N-terminus, the 483-residue chain is Glutamyl-tRNA(Gln) amidotransferase subunit A (483 aa).

Catalysis depends on charge relay system residues K76 and S151. Residue S175 is the Acyl-ester intermediate of the active site.

Belongs to the amidase family. GatA subfamily. As to quaternary structure, heterotrimer of A, B and C subunits.

The catalysed reaction is L-glutamyl-tRNA(Gln) + L-glutamine + ATP + H2O = L-glutaminyl-tRNA(Gln) + L-glutamate + ADP + phosphate + H(+). Functionally, allows the formation of correctly charged Gln-tRNA(Gln) through the transamidation of misacylated Glu-tRNA(Gln) in organisms which lack glutaminyl-tRNA synthetase. The reaction takes place in the presence of glutamine and ATP through an activated gamma-phospho-Glu-tRNA(Gln). The sequence is that of Glutamyl-tRNA(Gln) amidotransferase subunit A from Pseudomonas syringae pv. tomato (strain ATCC BAA-871 / DC3000).